Here is a 160-residue protein sequence, read N- to C-terminus: Protein cornichon homolog 2 (160 aa).

Residues 1–10 (MAFTFAAFCY) are Cytoplasmic-facing. A helical membrane pass occupies residues 11–31 (MLTLVLCASLIFFVIWHIIAF). Residues 32 to 72 (DELRTDFKNPIDQGNPARARERLKNIERICCLLRKLVVPEY) lie on the Lumenal side of the membrane. The helical transmembrane segment at 73–93 (SIHGLFCLMFLCAAEWVTLGL) threads the bilayer. Residues 94–138 (NIPLLFYHLWRYFHRPADGSEVMYDAVSIMNADILNYCQKESWCK) are Cytoplasmic-facing. A helical membrane pass occupies residues 139 to 159 (LAFYLLSFFYYLYSMVYTLVS). Residue phenylalanine 160 is a topological domain, lumenal.

Belongs to the cornichon family. In terms of assembly, acts as an auxiliary subunit for AMPA-selective glutamate receptors (AMPARs). Found in a complex with GRIA1, GRIA2, GRIA3, GRIA4, CNIH3, CACNG2, CACNG3, CACNG4, CACNG5, CACNG7 and CACNG8. Interacts with CACGN8. Interacts with GRIA1. Found in a complex with GRIA1, GRIA2, GRIA3, GRIA4, DLG4 and CACNG8. Expression is up-regulated in dorsolateral prefrontal cortex of patients with schizophrenia (postmortem brain study).

Its subcellular location is the endoplasmic reticulum membrane. It localises to the postsynaptic cell membrane. The protein localises to the cell projection. The protein resides in the dendrite. It is found in the dendritic spine. Its subcellular location is the postsynaptic density. Its function is as follows. Regulates the trafficking and gating properties of AMPA-selective glutamate receptors (AMPARs). Promotes their targeting to the cell membrane and synapses and modulates their gating properties by regulating their rates of activation, deactivation and desensitization. Blocks CACNG8-mediated resensitization of AMPA receptors. The sequence is that of Protein cornichon homolog 2 from Homo sapiens (Human).